The primary structure comprises 617 residues: Vitamin B12 transporter BtuB (617 aa).

Residues 1 to 22 (MRKTFLAITCASLLSPTFYSQA) form the signal peptide. The TonB box signature appears at 29–36 (ETVVVTAN). The TBDR plug domain maps to 40-154 (QIDGAVLAQT…ISGVINIITR (115 aa)). The 459-residue stretch at 159–617 (DDSGRVSAGY…QYFVSADYRF (459 aa)) folds into the TBDR beta-barrel domain. The TonB C-terminal box motif lies at 600–617 (VGYVTPGRQYFVSADYRF).

This sequence belongs to the TonB-dependent receptor family. BtuB (TC 1.B.14.3.1) subfamily.

Its subcellular location is the cell outer membrane. Functionally, involved in the active translocation of vitamin B12 (cyanocobalamin) across the outer membrane to the periplasmic space. It derives its energy for transport by interacting with the trans-periplasmic membrane protein TonB. This Vibrio campbellii (strain ATCC BAA-1116) protein is Vitamin B12 transporter BtuB.